Here is a 405-residue protein sequence, read N- to C-terminus: Riboflavin biosynthesis protein RibBA (405 aa).

The segment at 1–205 is DHBP synthase; sequence MEEIKLNTIE…IKDLIAYRLK (205 aa). Residues 30–31, D35, 144–148, and E168 contribute to the D-ribulose 5-phosphate site; these read RE and RAGHT. Mg(2+) is bound at residue E31. Position 147 (H147) interacts with Mg(2+). The segment at 206 to 405 is GTP cyclohydrolase II; the sequence is QESIVEKGVE…RMGHELHNIK (200 aa). A GTP-binding site is contributed by 256-260; the sequence is RMHSS. Residues C261, C272, and C274 each contribute to the Zn(2+) site. Residues Q277, 299 to 301, and T321 contribute to the GTP site; that span reads EGR. D333 serves as the catalytic Proton acceptor; for GTP cyclohydrolase activity. The active-site Nucleophile; for GTP cyclohydrolase activity is the R335. GTP is bound by residues T356 and K361.

In the N-terminal section; belongs to the DHBP synthase family. This sequence in the C-terminal section; belongs to the GTP cyclohydrolase II family. Requires Mg(2+) as cofactor. The cofactor is Mn(2+). Zn(2+) serves as cofactor.

It catalyses the reaction D-ribulose 5-phosphate = (2S)-2-hydroxy-3-oxobutyl phosphate + formate + H(+). The enzyme catalyses GTP + 4 H2O = 2,5-diamino-6-hydroxy-4-(5-phosphoribosylamino)-pyrimidine + formate + 2 phosphate + 3 H(+). The protein operates within cofactor biosynthesis; riboflavin biosynthesis; 2-hydroxy-3-oxobutyl phosphate from D-ribulose 5-phosphate: step 1/1. It functions in the pathway cofactor biosynthesis; riboflavin biosynthesis; 5-amino-6-(D-ribitylamino)uracil from GTP: step 1/4. Catalyzes the conversion of D-ribulose 5-phosphate to formate and 3,4-dihydroxy-2-butanone 4-phosphate. Functionally, catalyzes the conversion of GTP to 2,5-diamino-6-ribosylamino-4(3H)-pyrimidinone 5'-phosphate (DARP), formate and pyrophosphate. This is Riboflavin biosynthesis protein RibBA from Porphyromonas gingivalis (strain ATCC 33277 / DSM 20709 / CIP 103683 / JCM 12257 / NCTC 11834 / 2561).